We begin with the raw amino-acid sequence, 308 residues long: MLSVVEGIFIFVVISESVFGVLGNGFIGLVNCIDCAKNKLSTIGFILTGLAISRIFLIWVIITDGFIQIFSPDIYASGNLIEYISYIWVIGNQSSMWFATSLSIFYFLKIANFSNYIFLWLKSRTNMVLPFMMAFLLISSLLNFAHIVKILNDHKMKNDTVWHLNMYKSEYFIKQILLNLGVIFFFTLSLITCVLLIISLWRHNRQMQSNVTGLRDSNTEAHVKAMKVLISFIILFILYFIGMALEISRFTVPENKLLLMFGMTTTAIYPWGHSFILILGNSKLKQASLRVLQQLKCCEKRKKSQSHI.

Topologically, residues 1–6 (MLSVVE) are extracellular. The helical transmembrane segment at 7–27 (GIFIFVVISESVFGVLGNGFI) threads the bilayer. Residues 28-42 (GLVNCIDCAKNKLST) are Cytoplasmic-facing. The chain crosses the membrane as a helical span at residues 43-63 (IGFILTGLAISRIFLIWVIIT). Residues 64-100 (DGFIQIFSPDIYASGNLIEYISYIWVIGNQSSMWFAT) lie on the Extracellular side of the membrane. N-linked (GlcNAc...) asparagine glycosylation occurs at Asn92. The chain crosses the membrane as a helical span at residues 101-121 (SLSIFYFLKIANFSNYIFLWL). Over 122–126 (KSRTN) the chain is Cytoplasmic. Residues 127–147 (MVLPFMMAFLLISSLLNFAHI) traverse the membrane as a helical segment. The Extracellular segment spans residues 148–179 (VKILNDHKMKNDTVWHLNMYKSEYFIKQILLN). A glycan (N-linked (GlcNAc...) asparagine) is linked at Asn158. The chain crosses the membrane as a helical span at residues 180-200 (LGVIFFFTLSLITCVLLIISL). The Cytoplasmic portion of the chain corresponds to 201-227 (WRHNRQMQSNVTGLRDSNTEAHVKAMK). A helical transmembrane segment spans residues 228-248 (VLISFIILFILYFIGMALEIS). Topologically, residues 249–257 (RFTVPENKL) are extracellular. A helical transmembrane segment spans residues 258–278 (LLMFGMTTTAIYPWGHSFILI). The Cytoplasmic portion of the chain corresponds to 279–308 (LGNSKLKQASLRVLQQLKCCEKRKKSQSHI).

The protein belongs to the G-protein coupled receptor T2R family.

Its subcellular location is the membrane. Receptor that may play a role in the perception of bitterness and is gustducin-linked. May play a role in sensing the chemical composition of the gastrointestinal content. The activity of this receptor may stimulate alpha gustducin, mediate PLC-beta-2 activation and lead to the gating of TRPM5. The sequence is that of Taste receptor type 2 member 10 (TAS2R10) from Pongo pygmaeus (Bornean orangutan).